The primary structure comprises 135 residues: Large ribosomal subunit protein bL19 (135 aa).

It belongs to the bacterial ribosomal protein bL19 family.

In terms of biological role, this protein is located at the 30S-50S ribosomal subunit interface and may play a role in the structure and function of the aminoacyl-tRNA binding site. In Xanthomonas campestris pv. campestris (strain 8004), this protein is Large ribosomal subunit protein bL19.